A 229-amino-acid chain; its full sequence is DNA repair protein RecO (229 aa).

It belongs to the RecO family.

Functionally, involved in DNA repair and RecF pathway recombination. The chain is DNA repair protein RecO from Legionella pneumophila (strain Corby).